The chain runs to 220 residues: Deoxyribose-phosphate aldolase (220 aa).

Asp89 serves as the catalytic Proton donor/acceptor. Catalysis depends on Lys150, which acts as the Schiff-base intermediate with acetaldehyde. Lys182 functions as the Proton donor/acceptor in the catalytic mechanism.

This sequence belongs to the DeoC/FbaB aldolase family. DeoC type 1 subfamily.

It is found in the cytoplasm. It catalyses the reaction 2-deoxy-D-ribose 5-phosphate = D-glyceraldehyde 3-phosphate + acetaldehyde. Its pathway is carbohydrate degradation; 2-deoxy-D-ribose 1-phosphate degradation; D-glyceraldehyde 3-phosphate and acetaldehyde from 2-deoxy-alpha-D-ribose 1-phosphate: step 2/2. Functionally, catalyzes a reversible aldol reaction between acetaldehyde and D-glyceraldehyde 3-phosphate to generate 2-deoxy-D-ribose 5-phosphate. The chain is Deoxyribose-phosphate aldolase from Mycoplasmoides pirum (Mycoplasma pirum).